We begin with the raw amino-acid sequence, 478 residues long: UDP-glycosyltransferase 71B5 (478 aa).

UDP-alpha-D-glucose is bound by residues Ser-280, 347-349 (APQ), 364-372 (HCGWNSILE), and 386-389 (YAEQ).

This sequence belongs to the UDP-glycosyltransferase family.

Its function is as follows. Possesses low quercetin 3-O-glucosyltransferase activity in vitro. The protein is UDP-glycosyltransferase 71B5 (UGT71B5) of Arabidopsis thaliana (Mouse-ear cress).